A 397-amino-acid chain; its full sequence is Tryptophan synthase beta chain (397 aa).

The residue at position 87 (lysine 87) is an N6-(pyridoxal phosphate)lysine.

It belongs to the TrpB family. In terms of assembly, tetramer of two alpha and two beta chains. Pyridoxal 5'-phosphate is required as a cofactor.

The enzyme catalyses (1S,2R)-1-C-(indol-3-yl)glycerol 3-phosphate + L-serine = D-glyceraldehyde 3-phosphate + L-tryptophan + H2O. The protein operates within amino-acid biosynthesis; L-tryptophan biosynthesis; L-tryptophan from chorismate: step 5/5. In terms of biological role, the beta subunit is responsible for the synthesis of L-tryptophan from indole and L-serine. The chain is Tryptophan synthase beta chain from Citrobacter koseri (strain ATCC BAA-895 / CDC 4225-83 / SGSC4696).